Reading from the N-terminus, the 700-residue chain is Peroxisomal acyl-coenzyme A oxidase 3 (700 aa).

A2 is modified (N-acetylalanine). The residue at position 281 (T281) is a Phosphothreonine. A Microbody targeting signal motif is present at residues 698-700 (SKL).

It belongs to the acyl-CoA oxidase family. FAD serves as cofactor.

Its subcellular location is the peroxisome. The catalysed reaction is a 2,3-saturated acyl-CoA + O2 = a (2E)-enoyl-CoA + H2O2. It carries out the reaction (2S)-pristanoyl-CoA + O2 = (2E)-pristenoyl-CoA + H2O2. The enzyme catalyses tetracosanoyl-CoA + O2 = (2E)-tetracosenoyl-CoA + H2O2. It catalyses the reaction hexadecanoyl-CoA + O2 = (2E)-hexadecenoyl-CoA + H2O2. The catalysed reaction is hexadecanedioyl-CoA + O2 = (2E)-hexadecenedioyl-CoA + H2O2. The protein operates within lipid metabolism; peroxisomal fatty acid beta-oxidation. Its function is as follows. Oxidizes the CoA-esters of 2-methyl-branched fatty acids. The protein is Peroxisomal acyl-coenzyme A oxidase 3 (ACOX3) of Homo sapiens (Human).